A 114-amino-acid chain; its full sequence is ATP-dependent Clp protease adapter protein ClpS (114 aa).

Belongs to the ClpS family. Binds to the N-terminal domain of the chaperone ClpA.

Its function is as follows. Involved in the modulation of the specificity of the ClpAP-mediated ATP-dependent protein degradation. The polypeptide is ATP-dependent Clp protease adapter protein ClpS (Bdellovibrio bacteriovorus (strain ATCC 15356 / DSM 50701 / NCIMB 9529 / HD100)).